A 97-amino-acid chain; its full sequence is Ataxin-7-like protein 3B (97 aa).

Residues 76–97 form a disordered region; the sequence is SLPGDPGDGPQTELQRSPPEFQ. Serine 92 carries the phosphoserine modification.

This sequence belongs to the SGF11 family. In terms of assembly, interacts strongly with ENY2. Interacts weakly with USP22.

Its subcellular location is the cytoplasm. Functionally, by binding to ENY2, interferes with the nuclear functions of the deubiquitinase (DUB) module of the SAGA complex which consists of ENY2, ATXN7, ATXN7L3 and the histone deubiquitinating component USP22. Affects USP22 DUB activity toward histones indirectly by changing the subcellular distribution of ENY2 and altering ENY2 availability for ATXN7L3 interaction. Regulates H2B monoubiquitination (H2Bub1) levels through cytoplasmic sequestration of ENY2 resulting in loss of nuclear ENY2-ATXN7L3 association which destabilizes ATXN7L3. Affects protein expression levels of ENY2 and ATXN7L3. The polypeptide is Ataxin-7-like protein 3B (Atxn7l3b) (Mus musculus (Mouse)).